The sequence spans 295 residues: GATA transcription factor 18 (295 aa).

The GATA-type zinc-finger motif lies at 148-202 (SLLARRCANCDTTSTPLWRNGPRGPKSLCNACGIRFKKEERRTTAATGNTVVGAA).

The protein belongs to the type IV zinc-finger family. Class B subfamily. In terms of assembly, homodimer. Forms heterodimers with GATA19, GATA22 and GATA21. Interacts with JAG. Binds to AGO10/PNH. As to expression, expressed in vegetative and inflorescence shoot apical meristems (SAMs), axillary (SAMs), floral meristems, developing ovules and stamens, vascular tissues, and in the embryo.

It localises to the nucleus. In terms of biological role, transcriptional factor that specifically binds 5'-GATA-3' or 5'-GAT-3' motifs within gene promoters (including its own promoter and GATA21 promoter), thus regulating the expression of genes mostly involved in hormone responses and floral organ specification (including genes regulating hormones responses). Regulates both flower and shoot apical meristem (SAM) development, especially for establishing organ boundaries in shoots and flowers, probably by controlling the number and position of WUS-expressing cells. Coregulates, with AGO10/PNH, the shoot apical meristem (SAM) organization. Regulates floral organ development via the promotion of JAG and NPR5/BOP2 expression. Modulates cytokinin homeostasis in organ boundaries by regulating CKX3 expression. Involved in cell proliferation and differentiation. Required to position the inductive proembryo boundary via the regulation of gene expression and for early embryonic development. Together with GIF1/AN3, mediates cotyledon identity by preventing ectopic root formation through the repression of PLT1 expression. This is GATA transcription factor 18 from Arabidopsis thaliana (Mouse-ear cress).